A 237-amino-acid polypeptide reads, in one-letter code: Ribosomal RNA small subunit methyltransferase G (237 aa).

S-adenosyl-L-methionine is bound by residues Gly-78, Phe-83, 129–130, and Arg-148; that span reads AE. Residues 216–237 are disordered; the sequence is SKKKETPNKYPRKAGTPNKKPL.

It belongs to the methyltransferase superfamily. RNA methyltransferase RsmG family.

The protein resides in the cytoplasm. Specifically methylates the N7 position of a guanine in 16S rRNA. This is Ribosomal RNA small subunit methyltransferase G from Streptococcus agalactiae serotype Ia (strain ATCC 27591 / A909 / CDC SS700).